The primary structure comprises 255 residues: RNA polymerase sigma-F factor (255 aa).

Residues 61-74 carry the Polymerase core binding motif; it reads DLFQIGCIGLLKSV. Residues 221–240 constitute a DNA-binding region (H-T-H motif); sequence QSEVADRLGISQVQVSRLEK.

The protein belongs to the sigma-70 factor family.

Sigma factors are initiation factors that promote the attachment of RNA polymerase to specific initiation sites and are then released. This sigma factor is responsible for the expression of sporulation specific genes. This chain is RNA polymerase sigma-F factor (sigF), found in Bacillus licheniformis.